Here is a 469-residue protein sequence, read N- to C-terminus: Ribulose bisphosphate carboxylase large chain (469 aa).

The propeptide occupies 1–2 (MS). Pro-3 is modified (N-acetylproline). Lys-14 carries the N6,N6,N6-trimethyllysine modification. 2 residues coordinate substrate: Asn-123 and Thr-173. The active-site Proton acceptor is the Lys-175. Lys-177 lines the substrate pocket. Residues Lys-201, Asp-203, and Glu-204 each coordinate Mg(2+). Lys-201 is subject to N6-carboxylysine. Catalysis depends on His-294, which acts as the Proton acceptor. Residues Arg-295, His-327, and Ser-379 each coordinate substrate.

This sequence belongs to the RuBisCO large chain family. Type I subfamily. As to quaternary structure, heterohexadecamer of 8 large chains and 8 small chains; disulfide-linked. The disulfide link is formed within the large subunit homodimers. The cofactor is Mg(2+). In terms of processing, the disulfide bond which can form in the large chain dimeric partners within the hexadecamer appears to be associated with oxidative stress and protein turnover.

The protein resides in the plastid. Its subcellular location is the chloroplast. It carries out the reaction 2 (2R)-3-phosphoglycerate + 2 H(+) = D-ribulose 1,5-bisphosphate + CO2 + H2O. The enzyme catalyses D-ribulose 1,5-bisphosphate + O2 = 2-phosphoglycolate + (2R)-3-phosphoglycerate + 2 H(+). In terms of biological role, ruBisCO catalyzes two reactions: the carboxylation of D-ribulose 1,5-bisphosphate, the primary event in carbon dioxide fixation, as well as the oxidative fragmentation of the pentose substrate in the photorespiration process. Both reactions occur simultaneously and in competition at the same active site. This Brexia madagascariensis protein is Ribulose bisphosphate carboxylase large chain.